The chain runs to 357 residues: Isopenicillin-N N-acyltransferase (357 aa).

Residues D121 and R310 each contribute to the 6-aminopenicillanate site.

This sequence belongs to the peptidase C45 family. The active form of the enzyme results from processing of the 40-kDa monomeric precursor to a heterodimer containing subunits of 11 and 29 kDa. The pre-AAT protein is synthesized as 40 kDa precursor which is then self-processed into an 11 kDa (protein A) and a 29 kDa (protein B). The B protein carries AAT activity.

The protein resides in the peroxisome matrix. It catalyses the reaction isopenicillin N + phenylacetyl-CoA + H2O = penicillin G + L-2-aminoadipate + CoA + H(+). The protein operates within antibiotic biosynthesis; penicillin G biosynthesis; penicillin G from L-alpha-aminoadipate and L-cysteine and L-valine: step 3/3. Functionally, isopenicillin-N N-acyltransferase; part of the gene cluster that mediates the biosynthesis of penicillin, the world's most important antibiotic. AatA catalyzes the exchange of the alpha-aminoadipyl side chain of isopenicillin N for phenylacetic acid to yield penicillin. This step occurs in the peroxisomal matrix and the penM and paaT transporters are involved in the isopenicillin N and phenylacetic acid import into the peroxisome, respectively. The penicillin biosynthesis occurs via 3 enzymatic steps, the first corresponding to the production of the tripeptide N-[(5S)-5-amino-5-carboxypentanoyl]-L-cysteinyl-D-valine (LLD-ACV or ACV) by the NRPS acvA. The tripeptide ACV is then cyclized to isopenicillin N (IPN) by the isopenicillin N synthase ipnA that forms the beta-lactam nucleus. Finally, the alpha-aminoadipyl side chain is exchanged for phenylacetic acid by the isopenicillin N acyltransferase aatA to yield penicillin in the peroxisomal matrix. This Penicillium chrysogenum (Penicillium notatum) protein is Isopenicillin-N N-acyltransferase.